The sequence spans 432 residues: 5'-deoxyadenosine deaminase (432 aa).

His63 and His65 together coordinate Zn(2+). Substrate contacts are provided by Glu92 and His184. His211 lines the Zn(2+) pocket. 2 residues coordinate substrate: Glu214 and Asp299. Asp299 lines the Zn(2+) pocket.

This sequence belongs to the metallo-dependent hydrolases superfamily. MTA/SAH deaminase family. As to quaternary structure, homotetramer. The cofactor is Zn(2+).

The enzyme catalyses 5'-deoxyadenosine + H2O + H(+) = 5'-deoxyinosine + NH4(+). It catalyses the reaction S-adenosyl-L-homocysteine + H2O + H(+) = S-inosyl-L-homocysteine + NH4(+). It carries out the reaction S-methyl-5'-thioadenosine + H2O + H(+) = S-methyl-5'-thioinosine + NH4(+). The catalysed reaction is adenosine + H2O + H(+) = inosine + NH4(+). The protein operates within amino-acid biosynthesis; S-adenosyl-L-methionine biosynthesis. Functionally, catalyzes the deamination of three SAM-derived enzymatic products, namely 5'-deoxyadenosine, S-adenosyl-L-homocysteine, and 5'-methylthioadenosine, to produce the inosine analogs. Can also deaminate adenosine. The preferred substrate for this enzyme is 5'-deoxyadenosine, but all these substrates are efficiently deaminated. Likely functions in a S-adenosyl-L-methionine (SAM) recycling pathway from S-adenosyl-L-homocysteine (SAH) produced from SAM-dependent methylation reactions. May also be involved in the recycling of 5'-deoxyadenosine, whereupon the 5'-deoxyribose moiety of 5'-deoxyinosine is further metabolized to deoxyhexoses used for the biosynthesis of aromatic amino acids in methanogens. This chain is 5'-deoxyadenosine deaminase, found in Methanosarcina acetivorans (strain ATCC 35395 / DSM 2834 / JCM 12185 / C2A).